A 567-amino-acid polypeptide reads, in one-letter code: Glucose-6-phosphate isomerase, cytosolic B (567 aa).

Residues Gly156–Ser157, Ser212–Thr217, Gln356, Glu360, His391, and Lys516 each bind D-glucose 6-phosphate. The active-site Proton donor is the Glu360. Residues His391 and Lys516 contribute to the active site.

This sequence belongs to the GPI family. Homodimer.

The protein resides in the cytoplasm. It catalyses the reaction alpha-D-glucose 6-phosphate = beta-D-fructose 6-phosphate. The protein operates within carbohydrate degradation; glycolysis; D-glyceraldehyde 3-phosphate and glycerone phosphate from D-glucose: step 2/4. In terms of biological role, catalyzes the conversion of glucose-6-phosphate to fructose-6-phosphate, the second step in glycolysis, and the reverse reaction during gluconeogenesis. The sequence is that of Glucose-6-phosphate isomerase, cytosolic B from Oryza sativa subsp. japonica (Rice).